Here is a 182-residue protein sequence, read N- to C-terminus: Dual-action ribosomal maturation protein DarP (182 aa).

The tract at residues 1 to 20 is disordered; the sequence is MNKQPEEWQDPQSLQQQDDE.

It belongs to the DarP family.

Its subcellular location is the cytoplasm. Functionally, member of a network of 50S ribosomal subunit biogenesis factors which assembles along the 30S-50S interface, preventing incorrect 23S rRNA structures from forming. Promotes peptidyl transferase center (PTC) maturation. This Sodalis glossinidius (strain morsitans) protein is Dual-action ribosomal maturation protein DarP.